Consider the following 507-residue polypeptide: ATP synthase subunit alpha, chloroplastic (507 aa).

Residue 170–177 (GDRQTGKT) coordinates ATP.

This sequence belongs to the ATPase alpha/beta chains family. In terms of assembly, F-type ATPases have 2 components, CF(1) - the catalytic core - and CF(0) - the membrane proton channel. CF(1) has five subunits: alpha(3), beta(3), gamma(1), delta(1), epsilon(1). CF(0) has four main subunits: a, b, b' and c.

It localises to the plastid. Its subcellular location is the chloroplast thylakoid membrane. It catalyses the reaction ATP + H2O + 4 H(+)(in) = ADP + phosphate + 5 H(+)(out). Its function is as follows. Produces ATP from ADP in the presence of a proton gradient across the membrane. The alpha chain is a regulatory subunit. The sequence is that of ATP synthase subunit alpha, chloroplastic from Cycas taitungensis (Prince sago).